The primary structure comprises 610 residues: Protein arginine N-methyltransferase 5 (610 aa).

One can recognise an SAM-dependent MTase PRMT-type domain in the interval 284–587; sequence LEIPLQPLCD…VDATKVWYEW (304 aa). Y300 contacts S-adenosyl-L-methionine. Residue F303 participates in a protein binding. S-adenosyl-L-methionine is bound by residues 309 to 310, E368, and 396 to 397; these read KY and DM. Residues E412 and E421 each contribute to the a protein site. Active-site proton donor/acceptor residues include E412 and E421. Residues 470-610 form an interaction with vls region; the sequence is AFDYGYVSLL…TRGTGYNMRL (141 aa).

This sequence belongs to the class I-like SAM-binding methyltransferase superfamily. Protein arginine N-methyltransferase family. In terms of assembly, interacts with vls. In terms of tissue distribution, expressed only in ovaries.

The protein resides in the cytoplasm. Arginine methyltransferase that can both catalyze the formation of omega-N monomethylarginine (MMA) and symmetrical dimethylarginine (sDMA). Specifically mediates the symmetrical dimethylation of arginine residues in the small nuclear ribonucleoproteins SmD1 and SmD3. Required for arginine symmetrical dimethylation of piwi family proteins, piwi, aub and AGO3, during germline development. Required during oogenesis for pole cell formation in the pathway controlled by oskar (osk) and for abdominal segments during early embryogenesis. Involved in nanos (nos) and germ cell mRNAs localization. This chain is Protein arginine N-methyltransferase 5, found in Drosophila melanogaster (Fruit fly).